The following is a 162-amino-acid chain: Putative 4-hydroxy-4-methyl-2-oxoglutarate aldolase (162 aa).

Substrate is bound by residues 75-78 (GDML) and R97. D98 contributes to the a divalent metal cation binding site.

The protein belongs to the class II aldolase/RraA-like family. In terms of assembly, homotrimer. The cofactor is a divalent metal cation.

The enzyme catalyses 4-hydroxy-4-methyl-2-oxoglutarate = 2 pyruvate. It catalyses the reaction oxaloacetate + H(+) = pyruvate + CO2. Catalyzes the aldol cleavage of 4-hydroxy-4-methyl-2-oxoglutarate (HMG) into 2 molecules of pyruvate. Also contains a secondary oxaloacetate (OAA) decarboxylase activity due to the common pyruvate enolate transition state formed following C-C bond cleavage in the retro-aldol and decarboxylation reactions. The sequence is that of Putative 4-hydroxy-4-methyl-2-oxoglutarate aldolase from Pseudomonas syringae pv. tomato (strain ATCC BAA-871 / DC3000).